Reading from the N-terminus, the 493-residue chain is Glycerol kinase (493 aa).

Thr11 provides a ligand contact to ADP. The ATP site is built by Thr11, Thr12, and Ser13. Position 11 (Thr11) interacts with sn-glycerol 3-phosphate. Arg15 serves as a coordination point for ADP. Residues Arg80, Glu81, Tyr132, and Asp241 each contribute to the sn-glycerol 3-phosphate site. Glycerol is bound by residues Arg80, Glu81, Tyr132, Asp241, and Gln242. The ADP site is built by Thr263 and Gly306. ATP is bound by residues Thr263, Gly306, Gln310, and Gly408. Gly408 lines the ADP pocket.

It belongs to the FGGY kinase family.

The enzyme catalyses glycerol + ATP = sn-glycerol 3-phosphate + ADP + H(+). Its pathway is polyol metabolism; glycerol degradation via glycerol kinase pathway; sn-glycerol 3-phosphate from glycerol: step 1/1. With respect to regulation, inhibited by fructose 1,6-bisphosphate (FBP). Its function is as follows. Key enzyme in the regulation of glycerol uptake and metabolism. Catalyzes the phosphorylation of glycerol to yield sn-glycerol 3-phosphate. This chain is Glycerol kinase, found in Cereibacter sphaeroides (strain ATCC 17023 / DSM 158 / JCM 6121 / CCUG 31486 / LMG 2827 / NBRC 12203 / NCIMB 8253 / ATH 2.4.1.) (Rhodobacter sphaeroides).